We begin with the raw amino-acid sequence, 420 residues long: Probable protein phosphatase 2C 73 (420 aa).

The PPM-type phosphatase domain maps to 33–336 (GVSMHTKQGW…DDCAVVCLFL (304 aa)). Residues Asp-69 and Gly-70 each contribute to the Mn(2+) site. Polar residues predominate over residues 96–105 (LKTEQDPSSN). A disordered region spans residues 96 to 119 (LKTEQDPSSNTDKETLEKSDCTSL). The span at 106-115 (TDKETLEKSD) shows a compositional bias: basic and acidic residues. Mn(2+) contacts are provided by Asp-281 and Asp-327.

It belongs to the PP2C family. The cofactor is Mg(2+). Mn(2+) serves as cofactor.

It carries out the reaction O-phospho-L-seryl-[protein] + H2O = L-seryl-[protein] + phosphate. It catalyses the reaction O-phospho-L-threonyl-[protein] + H2O = L-threonyl-[protein] + phosphate. The protein is Probable protein phosphatase 2C 73 of Oryza sativa subsp. japonica (Rice).